Reading from the N-terminus, the 389-residue chain is Succinate--CoA ligase [ADP-forming] subunit beta (389 aa).

The ATP-grasp domain occupies 9-244 (KQILRKYGIP…PSQMSNNEAR (236 aa)). Residues Lys-46, 53–55 (GRG), Ile-102, and Glu-107 each bind ATP. Positions 199 and 213 each coordinate Mg(2+). Substrate contacts are provided by residues Asn-264 and 321–323 (GIM).

Belongs to the succinate/malate CoA ligase beta subunit family. Heterotetramer of two alpha and two beta subunits. The cofactor is Mg(2+).

The catalysed reaction is succinate + ATP + CoA = succinyl-CoA + ADP + phosphate. The enzyme catalyses GTP + succinate + CoA = succinyl-CoA + GDP + phosphate. It functions in the pathway carbohydrate metabolism; tricarboxylic acid cycle; succinate from succinyl-CoA (ligase route): step 1/1. Functionally, succinyl-CoA synthetase functions in the citric acid cycle (TCA), coupling the hydrolysis of succinyl-CoA to the synthesis of either ATP or GTP and thus represents the only step of substrate-level phosphorylation in the TCA. The beta subunit provides nucleotide specificity of the enzyme and binds the substrate succinate, while the binding sites for coenzyme A and phosphate are found in the alpha subunit. This chain is Succinate--CoA ligase [ADP-forming] subunit beta, found in Protochlamydia amoebophila (strain UWE25).